The primary structure comprises 86 residues: Exodeoxyribonuclease 7 small subunit (86 aa).

The segment at 64-86 (SNPETVQDKTDTDEPDSNEFSLT) is disordered.

Belongs to the XseB family. Heterooligomer composed of large and small subunits.

It localises to the cytoplasm. The catalysed reaction is Exonucleolytic cleavage in either 5'- to 3'- or 3'- to 5'-direction to yield nucleoside 5'-phosphates.. Functionally, bidirectionally degrades single-stranded DNA into large acid-insoluble oligonucleotides, which are then degraded further into small acid-soluble oligonucleotides. This chain is Exodeoxyribonuclease 7 small subunit, found in Akkermansia muciniphila (strain ATCC BAA-835 / DSM 22959 / JCM 33894 / BCRC 81048 / CCUG 64013 / CIP 107961 / Muc).